A 400-amino-acid chain; its full sequence is 8-amino-7-oxononanoate synthase (400 aa).

Arginine 21 contributes to the substrate binding site. 112–113 (GY) serves as a coordination point for pyridoxal 5'-phosphate. Histidine 137 serves as a coordination point for substrate. Residues serine 183, histidine 211, and threonine 239 each coordinate pyridoxal 5'-phosphate. Position 242 is an N6-(pyridoxal phosphate)lysine (lysine 242). Threonine 358 lines the substrate pocket.

The protein belongs to the class-II pyridoxal-phosphate-dependent aminotransferase family. BioF subfamily. In terms of assembly, homodimer. Pyridoxal 5'-phosphate serves as cofactor.

The enzyme catalyses 6-carboxyhexanoyl-[ACP] + L-alanine + H(+) = (8S)-8-amino-7-oxononanoate + holo-[ACP] + CO2. It functions in the pathway cofactor biosynthesis; biotin biosynthesis. Catalyzes the decarboxylative condensation of pimeloyl-[acyl-carrier protein] and L-alanine to produce 8-amino-7-oxononanoate (AON), [acyl-carrier protein], and carbon dioxide. The chain is 8-amino-7-oxononanoate synthase from Burkholderia lata (strain ATCC 17760 / DSM 23089 / LMG 22485 / NCIMB 9086 / R18194 / 383).